The primary structure comprises 217 residues: Zinc finger CCHC-type and RNA-binding motif-containing protein 1 (217 aa).

The RRM domain occupies Ser-10–Asp-88. The CCHC-type zinc-finger motif lies at Ser-105–Lys-122. Residues Cys-120–Asp-217 form a disordered region. The span at Pro-145 to Ala-163 shows a compositional bias: acidic residues. 3 positions are modified to phosphoserine: Ser-155, Ser-210, and Ser-216.

Component of the U11/U12 snRNPs that are part of the U12-type spliceosome.

Its subcellular location is the nucleus. The protein resides in the nucleoplasm. This Homo sapiens (Human) protein is Zinc finger CCHC-type and RNA-binding motif-containing protein 1 (ZCRB1).